Consider the following 577-residue polypeptide: Dihydroxy-acid dehydratase (577 aa).

The segment covering 1-10 (MLKRSFDKSK) has biased composition (basic and acidic residues). The interval 1–22 (MLKRSFDKSKLPSRHVTEGPSR) is disordered. C56 serves as a coordination point for [2Fe-2S] cluster. D88 contributes to the Mg(2+) binding site. A [2Fe-2S] cluster-binding site is contributed by C129. Mg(2+)-binding residues include D130 and K131. At K131 the chain carries N6-carboxylysine. C201 contributes to the [2Fe-2S] cluster binding site. E453 contacts Mg(2+). S479 serves as the catalytic Proton acceptor.

This sequence belongs to the IlvD/Edd family. As to quaternary structure, homodimer. Requires [2Fe-2S] cluster as cofactor. It depends on Mg(2+) as a cofactor.

It carries out the reaction (2R)-2,3-dihydroxy-3-methylbutanoate = 3-methyl-2-oxobutanoate + H2O. The catalysed reaction is (2R,3R)-2,3-dihydroxy-3-methylpentanoate = (S)-3-methyl-2-oxopentanoate + H2O. The protein operates within amino-acid biosynthesis; L-isoleucine biosynthesis; L-isoleucine from 2-oxobutanoate: step 3/4. It participates in amino-acid biosynthesis; L-valine biosynthesis; L-valine from pyruvate: step 3/4. In terms of biological role, functions in the biosynthesis of branched-chain amino acids. Catalyzes the dehydration of (2R,3R)-2,3-dihydroxy-3-methylpentanoate (2,3-dihydroxy-3-methylvalerate) into 2-oxo-3-methylpentanoate (2-oxo-3-methylvalerate) and of (2R)-2,3-dihydroxy-3-methylbutanoate (2,3-dihydroxyisovalerate) into 2-oxo-3-methylbutanoate (2-oxoisovalerate), the penultimate precursor to L-isoleucine and L-valine, respectively. This chain is Dihydroxy-acid dehydratase, found in Dinoroseobacter shibae (strain DSM 16493 / NCIMB 14021 / DFL 12).